A 304-amino-acid chain; its full sequence is D-tagatose-1-phosphate kinase (304 aa).

Aspartate 250 (proton acceptor) is an active-site residue.

The protein belongs to the carbohydrate kinase PfkB family. It depends on Mg(2+) as a cofactor.

It catalyses the reaction alpha-D-tagatopyranose 1-phosphate + ATP = D-tagatofuranose 1,6-bisphosphate + ADP + H(+). It functions in the pathway carbohydrate degradation. Kinase involved in a D-tagatose catabolic pathway. Catalyzes the phosphorylation of D-tagatose-1-phosphate (Tag-1P) to D-tagatose-1,6-bisphosphate. The polypeptide is D-tagatose-1-phosphate kinase (Klebsiella oxytoca).